We begin with the raw amino-acid sequence, 145 residues long: MYPAHLLVLLAVCVSLLGASDIPPQPLNLVQFSNMIQCANHGRRPTSNYMDYGCYCGKGGSGTPVDELDRCCKIHDDCYGEAEKSQKCAPYWTWYTWKCGSDGPQCDDSKTGCQRFVCDCDATAAKCFAKAPYNKENYNIKTRCQ.

The first 19 residues, 1–19 (MYPAHLLVLLAVCVSLLGA), serve as a signal peptide directing secretion. The propeptide occupies 20 to 27 (SDIPPQPL). 7 disulfides stabilise this stretch: C38-C99, C54-C144, C56-C72, C71-C127, C78-C120, C88-C113, and C106-C118. Ca(2+) is bound by residues Y55, G57, and G59. Residue H75 is part of the active site. D76 lines the Ca(2+) pocket. D121 is a catalytic residue.

The protein belongs to the phospholipase A2 family. Group I subfamily. D49 sub-subfamily. Ca(2+) is required as a cofactor. As to expression, expressed by the venom gland.

It is found in the secreted. It catalyses the reaction a 1,2-diacyl-sn-glycero-3-phosphocholine + H2O = a 1-acyl-sn-glycero-3-phosphocholine + a fatty acid + H(+). Functionally, snake venom phospholipase A2 (PLA2) that inhibits collagen-induced platelet aggregation. PLA2 catalyzes the calcium-dependent hydrolysis of the 2-acyl groups in 3-sn-phosphoglycerides. The chain is Basic phospholipase A2 S2-22 from Austrelaps superbus (Lowland copperhead snake).